Reading from the N-terminus, the 375-residue chain is Lipid-A-disaccharide synthase (375 aa).

This sequence belongs to the LpxB family.

It carries out the reaction a lipid X + a UDP-2-N,3-O-bis[(3R)-3-hydroxyacyl]-alpha-D-glucosamine = a lipid A disaccharide + UDP + H(+). It functions in the pathway bacterial outer membrane biogenesis; LPS lipid A biosynthesis. Its function is as follows. Condensation of UDP-2,3-diacylglucosamine and 2,3-diacylglucosamine-1-phosphate to form lipid A disaccharide, a precursor of lipid A, a phosphorylated glycolipid that anchors the lipopolysaccharide to the outer membrane of the cell. This is Lipid-A-disaccharide synthase from Pseudomonas putida (strain ATCC 47054 / DSM 6125 / CFBP 8728 / NCIMB 11950 / KT2440).